We begin with the raw amino-acid sequence, 168 residues long: uncharacterized protein (168 aa).

Residues 19–80 (LDKLDRHILN…VVSPKAVGRT (62 aa)) enclose the HTH asnC-type domain. A DNA-binding region (H-T-H motif) is located at residues 38–57 (LKELSEKVNSSVATCQRRVQ).

This is an uncharacterized protein from Haemophilus influenzae (strain ATCC 51907 / DSM 11121 / KW20 / Rd).